We begin with the raw amino-acid sequence, 141 residues long: Cystatin (141 aa).

The first 26 residues, 1-26, serve as a signal peptide directing secretion; that stretch reads MVHSQLPVAGPLRLLCALLLLPSATM. Positions 29–129 constitute a Cystatin domain; the sequence is GGLSPRSVTD…CHFQVWSRPW (101 aa). A Secondary area of contact motif is present at residues 73–77; sequence QVVSG. 2 disulfides stabilise this stretch: Cys91/Cys107 and Cys120/Cys140.

This sequence belongs to the cystatin family. In terms of tissue distribution, expressed at a low level by the venom gland (at protein level).

The protein localises to the secreted. Functionally, inhibits various C1 cysteine proteases including cathepsin L, papain and cathepsin B. This protein has no toxic activity and its function in the venom is unknown. It may play a role as a housekeeping or regulatory protein. The protein is Cystatin of Pseudechis australis (Mulga snake).